Here is a 457-residue protein sequence, read N- to C-terminus: MAKKKTKFMCQECGYESAKWMGKCPGCQSWNSMVEEFTEVKAKSSRSYVTSGAGIAKPQPITKVEREQEPRIDTSMKELNRVLGGGIVPGSLVLVGGDPGIGKSTLLLQLSARLADLKQRVLYISGEESVKQTKIRSDRLGVLSDHLYVLAETDMEKIEQAIGEVDPTLVIIDSIQTVYQDEITSAPGSVAQVRECTASFMRIAKTTGVAIFIVGHVTKQGAIAGPKLLEHMVDSVLYFEGERHHTYRILRAVKNRFGSTNEMGIFEMKESGLEEVANPSEIFLEDRSSGVAGSTVVASMEGTRPVLVELQALISPTSFGNPRRMATGVDHNRISLLMAVLEKRVGMLLQNQDAYVNVAGGVRLDEPAIDLGIAVSIASSFRNQHTNPHEVVIGEIGLTGEVRRVSRIDQRVNEAAKLGFKRVIIPDKNLGGWTIPSTIEVIGVSTVQDALEVTLGR.

Residues 10–27 form a C4-type zinc finger; that stretch reads CQECGYESAKWMGKCPGC. An ATP-binding site is contributed by 97–104; the sequence is GDPGIGKS. The RadA KNRFG motif signature appears at 254 to 258; the sequence is KNRFG. The lon-protease-like stretch occupies residues 353 to 457; it reads DAYVNVAGGV…QDALEVTLGR (105 aa).

The protein belongs to the RecA family. RadA subfamily.

In terms of biological role, DNA-dependent ATPase involved in processing of recombination intermediates, plays a role in repairing DNA breaks. Stimulates the branch migration of RecA-mediated strand transfer reactions, allowing the 3' invading strand to extend heteroduplex DNA faster. Binds ssDNA in the presence of ADP but not other nucleotides, has ATPase activity that is stimulated by ssDNA and various branched DNA structures, but inhibited by SSB. Does not have RecA's homology-searching function. The sequence is that of DNA repair protein RadA from Halalkalibacterium halodurans (strain ATCC BAA-125 / DSM 18197 / FERM 7344 / JCM 9153 / C-125) (Bacillus halodurans).